A 478-amino-acid chain; its full sequence is Argininosuccinate lyase (478 aa).

This sequence belongs to the lyase 1 family. Argininosuccinate lyase subfamily.

It localises to the cytoplasm. It catalyses the reaction 2-(N(omega)-L-arginino)succinate = fumarate + L-arginine. The protein operates within amino-acid biosynthesis; L-arginine biosynthesis; L-arginine from L-ornithine and carbamoyl phosphate: step 3/3. This chain is Argininosuccinate lyase, found in Leptospira biflexa serovar Patoc (strain Patoc 1 / Ames).